Consider the following 151-residue polypeptide: Probable transcriptional regulator syrB3 (151 aa).

The interval 1–65 (MVDESNAGPV…QERSEKLRLI (65 aa)) is disordered. Low complexity predominate over residues 7–23 (AGPVAPAVVADAEVKAP). A compositionally biased stretch (basic and acidic residues) spans 52 to 65 (GYSEQERSEKLRLI).

The protein belongs to the SyrB family.

This chain is Probable transcriptional regulator syrB3 (syrB3), found in Rhizobium meliloti (strain 1021) (Ensifer meliloti).